We begin with the raw amino-acid sequence, 723 residues long: tRNA (guanine(27)-N(2))-dimethyltransferase (723 aa).

Residues 1-10 (MENMAEEELL) are compositionally biased toward acidic residues. The disordered stretch occupies residues 1-72 (MENMAEEELL…SLASVPEEAE (72 aa)). Thr-23 is subject to Phosphothreonine. Residues 32 to 44 (PAADTALDSAPTP) are compositionally biased toward low complexity. The segment covering 45–59 (DSAPAPALAPAPAPA) has biased composition (pro residues). Position 61 is a phosphoserine (Ser-61). The Nucleolar localization signal motif lies at 128 to 132 (HKLRR). A C2H2-type zinc finger spans residues 177 to 199 (YHCIICSATITRRTDMLGHVKRH). Positions 220–679 (EVLKETDTDI…ASLTQFKSIL (460 aa)) constitute a Trm1 methyltransferase domain. Residues Arg-253, Asp-300, Asp-348, and Ala-349 each coordinate S-adenosyl-L-methionine. Positions 479, 482, 504, and 506 each coordinate Zn(2+). A Glycyl lysine isopeptide (Lys-Gly) (interchain with G-Cter in SUMO2) cross-link involves residue Lys-576. A Phosphoserine modification is found at Ser-603.

Belongs to the class I-like SAM-binding methyltransferase superfamily. Trm1 family.

The protein localises to the nucleus. It is found in the nucleolus. It carries out the reaction guanosine(27) in tRNA(Tyr) + 2 S-adenosyl-L-methionine = N(2)-dimethylguanosine(27) in tRNA(Tyr) + 2 S-adenosyl-L-homocysteine + 2 H(+). In terms of biological role, specifically dimethylates a single guanine residue at position 27 of tRNA(Tyr) using S-adenosyl-L-methionine as donor of the methyl groups. Dimethylation at position 27 of tRNA(Tyr) is required for efficient translation of tyrosine codons. Also required to maintain 3-(3-amino-3-carboxypropyl)uridine (acp3U) in the D-loop of several cytoplasmic tRNAs. The chain is tRNA (guanine(27)-N(2))-dimethyltransferase from Rattus norvegicus (Rat).